We begin with the raw amino-acid sequence, 143 residues long: Cofilin (143 aa).

Positions 5–137 constitute an ADF-H domain; that stretch reads GVAVADESLT…AYESVLEKVS (133 aa).

Belongs to the actin-binding proteins ADF family.

The protein resides in the cytoplasm. The protein localises to the cytoskeleton. It is found in the nucleus matrix. Functionally, controls reversibly actin polymerization and depolymerization in a pH-sensitive manner. It has the ability to bind G- and F-actin in a 1:1 ratio of cofilin to actin. Binding to F-actin is regulated by tropomyosin. It is the major component of intranuclear and cytoplasmic actin rods. Required for accumulation of actin at the cell division site via depolymerizing actin at the cell ends. In association with myosin II has a role in the assembly of the contractile ring via severing actin filaments. Involved in the maintenance of the contractile ring once formed. In association with profilin and capping protein, has a role in the mitotic reorganization of the actin cytoskeleton. The sequence is that of Cofilin (COF1) from Eremothecium gossypii (strain ATCC 10895 / CBS 109.51 / FGSC 9923 / NRRL Y-1056) (Yeast).